A 376-amino-acid polypeptide reads, in one-letter code: MMARFVSVSSCQFHFGFREVSPPSVTSYPRRFEVSDRRFPAIPIKCSSSEPENGEDSAPSLSSSSSSSTSEVSTSNSSTYNWYTGIGGIGMLDTAYLTYLKVTGSDAFCPIGGGTCGDVLNSDYAVVFGVPLPVIGFVMYGVVTALSAELGEGNLPFGISKSNGRFALFGITTAMASASAYFLYILSTKLSGSSCLYCLVSAFLSFSLFFLSVKDVKLQEIQQVVGLQICLAIIVVASLTASYSTAQPIPSRSGDIELPYFRTEISSSSSPYAIALAKHLNSIGAKMYGAFWCSHCLEQKEMFGREAAKELNYVECFPDGYKKGTKILKACADAAIEGFPTWIINDKVLSGEIELAELAEMTGFSLDQANETNQLQ.

A chloroplast-targeting transit peptide spans 1-45; sequence MMARFVSVSSCQFHFGFREVSPPSVTSYPRRFEVSDRRFPAIPIK. The disordered stretch occupies residues 44-77; it reads IKCSSSEPENGEDSAPSLSSSSSSSTSEVSTSNS. At 46–81 the chain is on the stromal side; the sequence is CSSSEPENGEDSAPSLSSSSSSSTSEVSTSNSSTYN. Over residues 57–77 the composition is skewed to low complexity; the sequence is SAPSLSSSSSSSTSEVSTSNS. A helical membrane pass occupies residues 82–102; that stretch reads WYTGIGGIGMLDTAYLTYLKV. Residues 103 to 125 are Lumenal-facing; sequence TGSDAFCPIGGGTCGDVLNSDYA. C109 and C116 are disulfide-bonded. A helical transmembrane segment spans residues 126–146; sequence VVFGVPLPVIGFVMYGVVTAL. At 147–165 the chain is on the stromal side; it reads SAELGEGNLPFGISKSNGR. The chain crosses the membrane as a helical span at residues 166-186; that stretch reads FALFGITTAMASASAYFLYIL. Residues 187–192 are Lumenal-facing; sequence STKLSG. Residues 193–213 traverse the membrane as a helical segment; the sequence is SSCLYCLVSAFLSFSLFFLSV. C195 and C198 are oxidised to a cystine. Residues 214–223 lie on the Stromal side of the membrane; the sequence is KDVKLQEIQQ. Residues 224–244 traverse the membrane as a helical segment; sequence VVGLQICLAIIVVASLTASYS. At 245-376 the chain is on the lumenal side; the sequence is TAQPIPSRSG…DQANETNQLQ (132 aa). Cystine bridges form between C293–C296 and C316–C331.

This sequence belongs to the VKOR family. Interacts with the PSII subunits PSBO1 and PSBO2. Interacts with TL17, TL20.3, HCF164, PETJ, VDE1, EDA3, FKBP13 and FKBP20-2. As to expression, expressed in cotyledons, rosette leaves, stems, cauline leaves and flowers.

The protein localises to the plastid. Its subcellular location is the chloroplast thylakoid membrane. Thiol-disulfide oxidoreductase catalyzing disulfide bond formation of chloroplast proteins and involved in redox regulation and photosynthetic electron transport. Required for the assembly of photosystem II (PSII) through the formation of disulfide bond in PSBO, a subunit of the PSII oxygen-evolving complex in the thylakoid lumen. Involved in the formation of disulfide bonds in the lumenal protein FKBP13. In vitro, reduces phylloquinone (vitamin K1) and menaquinone (vitamin K2) to their respective quinol. Cannot reduce phylloquinone epoxide to phylloquinone. Plays an important role in regulating the thylakoid lumen redox. This is Thiol-disulfide oxidoreductase LTO1 from Arabidopsis thaliana (Mouse-ear cress).